The primary structure comprises 407 residues: Aminomethyltransferase, mitochondrial (407 aa).

A mitochondrion-targeting transit peptide spans 1–29 (MRGGLWQLGQSITRRLGQSDKKTIARRCY). Substrate-binding residues include E234, R265, and Y403.

It belongs to the GcvT family. The glycine cleavage system is composed of four proteins: P, T, L and H.

The protein localises to the mitochondrion. It carries out the reaction N(6)-[(R)-S(8)-aminomethyldihydrolipoyl]-L-lysyl-[protein] + (6S)-5,6,7,8-tetrahydrofolate = N(6)-[(R)-dihydrolipoyl]-L-lysyl-[protein] + (6R)-5,10-methylene-5,6,7,8-tetrahydrofolate + NH4(+). Functionally, the glycine cleavage system catalyzes the degradation of glycine. This Flaveria pringlei protein is Aminomethyltransferase, mitochondrial (GDCST).